The following is a 454-amino-acid chain: UPF0210 protein EUBREC_1565 (454 aa).

This sequence belongs to the UPF0210 family. As to quaternary structure, homodimer.

The chain is UPF0210 protein EUBREC_1565 from Agathobacter rectalis (strain ATCC 33656 / DSM 3377 / JCM 17463 / KCTC 5835 / VPI 0990) (Eubacterium rectale).